Consider the following 1207-residue polypeptide: DNA-directed RNA polymerase subunit beta' (1207 aa).

Zn(2+) is bound by residues cysteine 60, cysteine 62, cysteine 75, and cysteine 78. Aspartate 449, aspartate 451, and aspartate 453 together coordinate Mg(2+). Residues cysteine 822, cysteine 896, cysteine 903, and cysteine 906 each contribute to the Zn(2+) site.

It belongs to the RNA polymerase beta' chain family. The RNAP catalytic core consists of 2 alpha, 1 beta, 1 beta' and 1 omega subunit. When a sigma factor is associated with the core the holoenzyme is formed, which can initiate transcription. Mg(2+) is required as a cofactor. Zn(2+) serves as cofactor.

It carries out the reaction RNA(n) + a ribonucleoside 5'-triphosphate = RNA(n+1) + diphosphate. In terms of biological role, DNA-dependent RNA polymerase catalyzes the transcription of DNA into RNA using the four ribonucleoside triphosphates as substrates. The chain is DNA-directed RNA polymerase subunit beta' from Staphylococcus aureus (strain NCTC 8325 / PS 47).